Consider the following 142-residue polypeptide: Large-conductance mechanosensitive channel (142 aa).

3 consecutive transmembrane segments (helical) span residues 10–30, 40–60, and 86–106; these read FAVK…GAFG, LIMP…LFVV, and GNFI…FMMV.

Belongs to the MscL family. In terms of assembly, homopentamer.

It is found in the cell inner membrane. Channel that opens in response to stretch forces in the membrane lipid bilayer. May participate in the regulation of osmotic pressure changes within the cell. This chain is Large-conductance mechanosensitive channel, found in Delftia acidovorans (strain DSM 14801 / SPH-1).